The following is a 500-amino-acid chain: MADKSEKTKARLPRGFADRSAEDIRAVEKMMATIRSVYELYGFEPADQPLIEYTDALGKFLPDQDRPNEGVFSFQDDDEQWLSLRYDLTAPTARFVAENYERLPKPYRSYRSGWVFRNEKPGPGRFRQFMQFDADTIGTPGVAADAEMAMMMADVMEALGIKRGDYVIRVNNRKVLDGVLEAIGLGGEENIGRRLTVLRAIDKLDKLGPEGVKLLLGPGRWDGGKEGEGDFAKGAGLNNGQAEAVLQATARNAQAAQDSVVDSNATYQEGVGELATIEALVRAAGYGEDRIAMDRSVVRGLEYYTGPVFEAELLAEIPNEDGQIVRFGSVGGGGRYDGLVSRFRGEPVPATGFSIGVSRLMTALKNLGKLDNADVIAPVVVLVMDKDTESLGRYQKMVSELRAAGIRSEMYLGGAGMKAQLKYADRRGCPVAIIQGGDERAKGELQIKDLIEGARMSAEITDNAEWRAARPAQVTVAESELVAEVKKILAAQAEERARGK.

It belongs to the class-II aminoacyl-tRNA synthetase family. In terms of assembly, homodimer.

The protein localises to the cytoplasm. It carries out the reaction tRNA(His) + L-histidine + ATP = L-histidyl-tRNA(His) + AMP + diphosphate + H(+). This chain is Histidine--tRNA ligase (hisS), found in Mesorhizobium japonicum (strain LMG 29417 / CECT 9101 / MAFF 303099) (Mesorhizobium loti (strain MAFF 303099)).